Reading from the N-terminus, the 411-residue chain is Acetyl-coenzyme A carboxylase carboxyl transferase subunit beta, chloroplastic (411 aa).

The CoA carboxyltransferase N-terminal domain maps to 32–302 (LWTRCDHCGV…KEQGRIPYGE (271 aa)). The Zn(2+) site is built by Cys36, Cys39, Cys55, and Cys58. A C4-type zinc finger spans residues 36 to 58 (CDHCGVILYIKHLKENQRVCFGC).

Belongs to the AccD/PCCB family. As to quaternary structure, acetyl-CoA carboxylase is a heterohexamer composed of biotin carboxyl carrier protein, biotin carboxylase and 2 subunits each of ACCase subunit alpha and ACCase plastid-coded subunit beta (accD). The cofactor is Zn(2+).

Its subcellular location is the plastid. The protein resides in the chloroplast stroma. It carries out the reaction N(6)-carboxybiotinyl-L-lysyl-[protein] + acetyl-CoA = N(6)-biotinyl-L-lysyl-[protein] + malonyl-CoA. Its pathway is lipid metabolism; malonyl-CoA biosynthesis; malonyl-CoA from acetyl-CoA: step 1/1. Functionally, component of the acetyl coenzyme A carboxylase (ACC) complex. Biotin carboxylase (BC) catalyzes the carboxylation of biotin on its carrier protein (BCCP) and then the CO(2) group is transferred by the transcarboxylase to acetyl-CoA to form malonyl-CoA. The protein is Acetyl-coenzyme A carboxylase carboxyl transferase subunit beta, chloroplastic of Chlorella vulgaris (Green alga).